Reading from the N-terminus, the 92-residue chain is Large ribosomal subunit protein bL25 (92 aa).

Belongs to the bacterial ribosomal protein bL25 family. Part of the 50S ribosomal subunit; part of the 5S rRNA/L5/L18/L25 subcomplex. Contacts the 5S rRNA. Binds to the 5S rRNA independently of L5 and L18.

Functionally, this is one of the proteins that binds to the 5S RNA in the ribosome where it forms part of the central protuberance. The chain is Large ribosomal subunit protein bL25 from Vibrio atlanticus (strain LGP32) (Vibrio splendidus (strain Mel32)).